The sequence spans 319 residues: Cytochrome c biogenesis protein CcsA (319 aa).

The next 8 helical transmembrane spans lie at 14 to 34 (AFGGLLIAMLVYWISLAFPGI), 36 to 56 (GLNRLATLITLLVNIALTLTL), 69 to 89 (SNLYESLLFLAWGLTFVHLFI), 97 to 117 (LIGATAIPVAMFVTAFASLAL), 142 to 162 (IMMLSYAILILGSLLSILFLI), 227 to 247 (TIGLGFPLLTIGIIAGAVWAN), 254 to 274 (WSWDPKETWALITWLIFAAYL), and 288 to 308 (AILASLGFLVVWICYLGVNFL).

Belongs to the CcmF/CycK/Ccl1/NrfE/CcsA family. As to quaternary structure, may interact with Ccs1.

The protein resides in the plastid. Its subcellular location is the chloroplast thylakoid membrane. Its function is as follows. Required during biogenesis of c-type cytochromes (cytochrome c6 and cytochrome f) at the step of heme attachment. This is Cytochrome c biogenesis protein CcsA from Pyropia yezoensis (Susabi-nori).